The primary structure comprises 74 residues: Large ribosomal subunit protein bL31 (74 aa).

Zn(2+) is bound by residues Cys-16, Cys-18, Cys-38, and Cys-41.

It belongs to the bacterial ribosomal protein bL31 family. Type A subfamily. As to quaternary structure, part of the 50S ribosomal subunit. The cofactor is Zn(2+).

Its function is as follows. Binds the 23S rRNA. The protein is Large ribosomal subunit protein bL31 of Acinetobacter baumannii (strain AB307-0294).